The primary structure comprises 264 residues: Thiazole synthase (264 aa).

The Schiff-base intermediate with DXP role is filled by Lys106. 1-deoxy-D-xylulose 5-phosphate is bound by residues Gly167, 193–194 (AG), and 215–216 (NT).

The protein belongs to the ThiG family. In terms of assembly, homotetramer. Forms heterodimers with either ThiH or ThiS.

The protein resides in the cytoplasm. It catalyses the reaction [ThiS sulfur-carrier protein]-C-terminal-Gly-aminoethanethioate + 2-iminoacetate + 1-deoxy-D-xylulose 5-phosphate = [ThiS sulfur-carrier protein]-C-terminal Gly-Gly + 2-[(2R,5Z)-2-carboxy-4-methylthiazol-5(2H)-ylidene]ethyl phosphate + 2 H2O + H(+). The protein operates within cofactor biosynthesis; thiamine diphosphate biosynthesis. In terms of biological role, catalyzes the rearrangement of 1-deoxy-D-xylulose 5-phosphate (DXP) to produce the thiazole phosphate moiety of thiamine. Sulfur is provided by the thiocarboxylate moiety of the carrier protein ThiS. In vitro, sulfur can be provided by H(2)S. The protein is Thiazole synthase of Stenotrophomonas maltophilia (strain K279a).